We begin with the raw amino-acid sequence, 420 residues long: UDP-N-acetylglucosamine 1-carboxyvinyltransferase (420 aa).

22–23 (KN) lines the phosphoenolpyruvate pocket. Residue Arg91 participates in UDP-N-acetyl-alpha-D-glucosamine binding. The Proton donor role is filled by Cys115. The residue at position 115 (Cys115) is a 2-(S-cysteinyl)pyruvic acid O-phosphothioketal. UDP-N-acetyl-alpha-D-glucosamine is bound by residues 120-124 (RPVDL), 160-163 (KVSV), Asp305, and Ile327.

This sequence belongs to the EPSP synthase family. MurA subfamily.

The protein resides in the cytoplasm. It catalyses the reaction phosphoenolpyruvate + UDP-N-acetyl-alpha-D-glucosamine = UDP-N-acetyl-3-O-(1-carboxyvinyl)-alpha-D-glucosamine + phosphate. The protein operates within cell wall biogenesis; peptidoglycan biosynthesis. Cell wall formation. Adds enolpyruvyl to UDP-N-acetylglucosamine. The chain is UDP-N-acetylglucosamine 1-carboxyvinyltransferase from Erwinia tasmaniensis (strain DSM 17950 / CFBP 7177 / CIP 109463 / NCPPB 4357 / Et1/99).